The primary structure comprises 698 residues: MRFAVGALLACAALGLCLAVPDKTVKWCAVSEHENTKCISFRDHMKTVLPADGPRLACVKKTSYQDCIKAISGGEADAITLDGGWVYDAGLTPNNLKPVAAEFYGSLEHPQTHYLAVAVVKKGTDFQLNQLQGKKSCHTGLGRSAGWIIPIGLLFCNLPEPRKPLEKAVASFFSGSCVPCADPVAFPQLCQLCPGCGCSPTQPFFGYVGAFKCLRDGGGDVAFVKHTTIFEVLPQKADRDQYELLCLDNTRKPVDQYEDCYLARIPSHAVVARNGDGKEDLIWEILKVAQEHFGKGKSKDFQLFGSPLGKDLLFKDSAFGLLRVPPRMDYRLYLGHSYVTAIRNQREGVCPEGSIDSAPVKWCALSHQERAKCDEWSVSSNGQIECESAESTEDCIDKIVNGEADAMSLDGGHAYIAGQCGLVPVMAENYDISSCTNPQSDVFPKGYYAVAVVKASDSSINWNNLKGKKSCHTGVDRTAGWNIPMGLLFSRINHCKFDEFFSQGCAPGYKKNSTLCDLCIGPAKCAPNNREGYNGYTGAFQCLVEKGDVAFVKHQTVLENTNGKNTAAWAKDLKQEDFQLLCPDGTKKPVTEFATCHLAQAPNHVVVSRKEKAARVSTVLTAQKDLFWKGDKDCTGNFCLFRSSTKDLLFRDDTKCLTKLPEGTTYEEYLGAEYLQAVGNIRKCSTSRLLEACTFHKS.

The signal sequence occupies residues 1–19; sequence MRFAVGALLACAALGLCLA. Transferrin-like domains follow at residues 25 to 347 and 360 to 683; these read VKWC…NQRE and VKWC…NIRK. Disulfide bonds link Cys28–Cys67 and Cys38–Cys58. Arg42 carries the dimethylated arginine modification. Fe(3+)-binding residues include Asp82 and Tyr114. Intrachain disulfides connect Cys137/Cys213, Cys156/Cys350, Cys177/Cys193, Cys180/Cys196, Cys190/Cys198, Cys246/Cys260, Cys363/Cys395, and Cys373/Cys386. Residues Thr139, Arg143, Ala145, and Gly146 each contribute to the hydrogencarbonate site. Tyr207 contacts Fe(3+). His268 contacts Fe(3+). Residue Ser388 is modified to Phosphoserine. Asp410 and Tyr447 together coordinate Fe(3+). Cystine bridges form between Cys420/Cys693, Cys435/Cys656, Cys471/Cys542, Cys495/Cys684, Cys505/Cys519, Cys516/Cys525, Cys582/Cys596, and Cys634/Cys639. The hydrogencarbonate site is built by Thr473, Arg477, Ala479, and Gly480. An N-linked (GlcNAc...) asparagine glycan is attached at Asn512. Fe(3+) is bound at residue Tyr536. Position 604 (His604) interacts with Fe(3+). Ser685 carries the post-translational modification Phosphoserine.

Belongs to the transferrin family. In terms of assembly, monomer. Part of a complex composed of SLC40A1/ferroportin, TF/transferrin and HEPH/hephaestin that transfers iron from cells to transferrin. In terms of tissue distribution, expressed by the liver and secreted in plasma.

It localises to the secreted. In terms of biological role, transferrins are iron binding transport proteins which can bind two Fe(3+) ions in association with the binding of an anion, usually bicarbonate. It is responsible for the transport of iron from sites of absorption and heme degradation to those of storage and utilization. Serum transferrin may also have a further role in stimulating cell proliferation. The chain is Serotransferrin (Tf) from Rattus norvegicus (Rat).